Reading from the N-terminus, the 295-residue chain is tRNA-cytidine(32) 2-sulfurtransferase (295 aa).

A PP-loop motif motif is present at residues 59–64 (SGGKDS). The [4Fe-4S] cluster site is built by Cys134, Cys137, and Cys225.

The protein belongs to the TtcA family. In terms of assembly, homodimer. Mg(2+) is required as a cofactor. Requires [4Fe-4S] cluster as cofactor.

The protein localises to the cytoplasm. It catalyses the reaction cytidine(32) in tRNA + S-sulfanyl-L-cysteinyl-[cysteine desulfurase] + AH2 + ATP = 2-thiocytidine(32) in tRNA + L-cysteinyl-[cysteine desulfurase] + A + AMP + diphosphate + H(+). Its pathway is tRNA modification. Its function is as follows. Catalyzes the ATP-dependent 2-thiolation of cytidine in position 32 of tRNA, to form 2-thiocytidine (s(2)C32). The sulfur atoms are provided by the cysteine/cysteine desulfurase (IscS) system. This is tRNA-cytidine(32) 2-sulfurtransferase from Ruegeria sp. (strain TM1040) (Silicibacter sp.).